Here is an 819-residue protein sequence, read N- to C-terminus: DNA topoisomerase 4 subunit A (819 aa).

In terms of domain architecture, Topo IIA-type catalytic spans 30 to 496 (LPDIRDGLKP…QIIEIDTASL (467 aa)). The active-site O-(5'-phospho-DNA)-tyrosine intermediate is the Tyr-118.

Belongs to the type II topoisomerase GyrA/ParC subunit family. ParC type 2 subfamily. In terms of assembly, heterotetramer composed of ParC and ParE.

The protein localises to the cell membrane. The catalysed reaction is ATP-dependent breakage, passage and rejoining of double-stranded DNA.. In terms of biological role, topoisomerase IV is essential for chromosome segregation. It relaxes supercoiled DNA. Performs the decatenation events required during the replication of a circular DNA molecule. This is DNA topoisomerase 4 subunit A from Streptococcus pyogenes serotype M3 (strain ATCC BAA-595 / MGAS315).